The following is a 345-amino-acid chain: MSLTYRDAGVDIDEGDRLVDLIKPHARPTLRPEVLGGIGGFGGLFALDVKKYREPVLVSGTDGVGTKLKVAFAADRHDTVGIDLVAMCVNDIAVVGAEPLFFLDYYATGKLSAEQGAQVVKGIAEGCRQAGCALIGGETAELPGFYERGEYDLAGFAVGCVDRPRIVDGTRVARGDVVIGIASSGLHSNGFSLARKALLDRYPLDHRFEALGGRTLADALLEPTRIYAKDVLALLEQVPVRAFAHITGGGLPGNVPRTLPDGTRAVLEEQRWPRPVIFDLVEREGQVPRDEMYRTFNMGLGLVAVVAPGDEAAAHAALRARGLEAWTVGAIEAGGPGEATCEVVR.

Belongs to the AIR synthase family.

It is found in the cytoplasm. The enzyme catalyses 2-formamido-N(1)-(5-O-phospho-beta-D-ribosyl)acetamidine + ATP = 5-amino-1-(5-phospho-beta-D-ribosyl)imidazole + ADP + phosphate + H(+). The protein operates within purine metabolism; IMP biosynthesis via de novo pathway; 5-amino-1-(5-phospho-D-ribosyl)imidazole from N(2)-formyl-N(1)-(5-phospho-D-ribosyl)glycinamide: step 2/2. This is Phosphoribosylformylglycinamidine cyclo-ligase from Anaeromyxobacter sp. (strain K).